The primary structure comprises 511 residues: Zinc finger CCCH-type with G patch domain-containing protein (511 aa).

Residues Pro157–Leu180 form a C3H1-type zinc finger. The interval Asp254–Asp281 is disordered. Over residues Ser271–Asp281 the composition is skewed to acidic residues. Residues Thr311–Glu357 form the G-patch domain. Disordered stretches follow at residues Gly409–Thr433 and Met478–Phe511. The span at Gln414 to Ala425 shows a compositional bias: basic and acidic residues. Positions Met478–Arg493 are enriched in polar residues. Positions Ser494–Phe511 are enriched in basic and acidic residues.

It is found in the nucleus. Functionally, transcription repressor. This Drosophila ananassae (Fruit fly) protein is Zinc finger CCCH-type with G patch domain-containing protein.